The sequence spans 117 residues: Large ribosomal subunit protein bL17 (117 aa).

This sequence belongs to the bacterial ribosomal protein bL17 family. Part of the 50S ribosomal subunit. Contacts protein L32.

This is Large ribosomal subunit protein bL17 from Campylobacter lari (strain RM2100 / D67 / ATCC BAA-1060).